The chain runs to 253 residues: Phosphoribosylaminoimidazole-succinocarboxamide synthase (253 aa).

It belongs to the SAICAR synthetase family.

The enzyme catalyses 5-amino-1-(5-phospho-D-ribosyl)imidazole-4-carboxylate + L-aspartate + ATP = (2S)-2-[5-amino-1-(5-phospho-beta-D-ribosyl)imidazole-4-carboxamido]succinate + ADP + phosphate + 2 H(+). Its pathway is purine metabolism; IMP biosynthesis via de novo pathway; 5-amino-1-(5-phospho-D-ribosyl)imidazole-4-carboxamide from 5-amino-1-(5-phospho-D-ribosyl)imidazole-4-carboxylate: step 1/2. The chain is Phosphoribosylaminoimidazole-succinocarboxamide synthase from Dinoroseobacter shibae (strain DSM 16493 / NCIMB 14021 / DFL 12).